The chain runs to 133 residues: Large ribosomal subunit protein uL15 (133 aa).

The segment at 1 to 62 (MALHNLQPAP…GQQPLQRRLP (62 aa)) is disordered. Positions 32 to 45 (TRGQKGQKSRTGYS) are enriched in polar residues.

Belongs to the universal ribosomal protein uL15 family. Part of the 50S ribosomal subunit.

In terms of biological role, binds to the 23S rRNA. In Nitratiruptor sp. (strain SB155-2), this protein is Large ribosomal subunit protein uL15.